The primary structure comprises 322 residues: Aspartate carbamoyltransferase catalytic subunit (322 aa).

Positions 70 and 71 each coordinate carbamoyl phosphate. Lys98 is an L-aspartate binding site. 3 residues coordinate carbamoyl phosphate: Arg120, His150, and Gln153. Residues Arg184 and Arg239 each coordinate L-aspartate. The carbamoyl phosphate site is built by Gly280 and Pro281.

Belongs to the aspartate/ornithine carbamoyltransferase superfamily. ATCase family. As to quaternary structure, heterododecamer (2C3:3R2) of six catalytic PyrB chains organized as two trimers (C3), and six regulatory PyrI chains organized as three dimers (R2).

It catalyses the reaction carbamoyl phosphate + L-aspartate = N-carbamoyl-L-aspartate + phosphate + H(+). It functions in the pathway pyrimidine metabolism; UMP biosynthesis via de novo pathway; (S)-dihydroorotate from bicarbonate: step 2/3. Its function is as follows. Catalyzes the condensation of carbamoyl phosphate and aspartate to form carbamoyl aspartate and inorganic phosphate, the committed step in the de novo pyrimidine nucleotide biosynthesis pathway. The chain is Aspartate carbamoyltransferase catalytic subunit from Xylella fastidiosa (strain 9a5c).